A 77-amino-acid polypeptide reads, in one-letter code: Translational regulator CsrA (77 aa).

Residues A58 to K77 are disordered. Residues D68–K77 show a composition bias toward polar residues.

The protein belongs to the CsrA/RsmA family. As to quaternary structure, homodimer; the beta-strands of each monomer intercalate to form a hydrophobic core, while the alpha-helices form wings that extend away from the core.

Its subcellular location is the cytoplasm. In terms of biological role, a translational regulator that binds mRNA to regulate translation initiation and/or mRNA stability. Usually binds in the 5'-UTR at or near the Shine-Dalgarno sequence preventing ribosome-binding, thus repressing translation. Its main target seems to be the major flagellin gene, while its function is anatagonized by FliW. This chain is Translational regulator CsrA, found in Magnetococcus marinus (strain ATCC BAA-1437 / JCM 17883 / MC-1).